The following is a 309-amino-acid chain: Haloalkane dehalogenase (309 aa).

The 112-residue stretch at 37–148 (PTVLFLHGNP…FERWEDFHQR (112 aa)) folds into the AB hydrolase-1 domain. The Nucleophile role is filled by Asp110. Glu134 (proton donor) is an active-site residue. The active-site Proton acceptor is His278.

It belongs to the haloalkane dehalogenase family. Type 2 subfamily. As to quaternary structure, monomer.

The enzyme catalyses 1-haloalkane + H2O = a halide anion + a primary alcohol + H(+). In terms of biological role, catalyzes hydrolytic cleavage of carbon-halogen bonds in halogenated aliphatic compounds, leading to the formation of the corresponding primary alcohols, halide ions and protons. The sequence is that of Haloalkane dehalogenase from Mesorhizobium japonicum (strain LMG 29417 / CECT 9101 / MAFF 303099) (Mesorhizobium loti (strain MAFF 303099)).